A 199-amino-acid polypeptide reads, in one-letter code: ATP-dependent Clp protease proteolytic subunit (199 aa).

S97 functions as the Nucleophile in the catalytic mechanism. H122 is an active-site residue.

Belongs to the peptidase S14 family. Fourteen ClpP subunits assemble into 2 heptameric rings which stack back to back to give a disk-like structure with a central cavity, resembling the structure of eukaryotic proteasomes.

The protein resides in the cytoplasm. The enzyme catalyses Hydrolysis of proteins to small peptides in the presence of ATP and magnesium. alpha-casein is the usual test substrate. In the absence of ATP, only oligopeptides shorter than five residues are hydrolyzed (such as succinyl-Leu-Tyr-|-NHMec, and Leu-Tyr-Leu-|-Tyr-Trp, in which cleavage of the -Tyr-|-Leu- and -Tyr-|-Trp bonds also occurs).. Its function is as follows. Cleaves peptides in various proteins in a process that requires ATP hydrolysis. Has a chymotrypsin-like activity. Plays a major role in the degradation of misfolded proteins. This chain is ATP-dependent Clp protease proteolytic subunit, found in Citrifermentans bemidjiense (strain ATCC BAA-1014 / DSM 16622 / JCM 12645 / Bem) (Geobacter bemidjiensis).